Here is a 266-residue protein sequence, read N- to C-terminus: PTS system mannose-specific EIIC component (266 aa).

At Met1 the chain carries N-formylmethionine. At 1–4 (MEIT) the chain is on the periplasmic side. One can recognise a PTS EIIC type-4 domain in the interval 1–237 (MEITTLQIVL…GVIGTVMAVL (237 aa)). Residues 5–43 (TLQIVLVFIVACIAGMGSILDEFQFHRPLIACTLVGIVL) lie within the membrane without spanning it. Topologically, residues 44–46 (GDM) are periplasmic. An intramembrane segment occupies 47–86 (KTGIIIGGTLEMIALGWMNIGAAVAPDAALASIISTILVI). The Periplasmic portion of the chain corresponds to 87 to 90 (AGHQ). A transmembrane helix spans residues 91–124 (SIGAGIALAIPLAAAGQVLTIIVRTITVAFQHAA). The Cytoplasmic segment spans residues 125-132 (DKAADNGN). Residues 133 to 160 (LTAISWIHVSSLFLQAMRVAIPAVIVAL) are membrane-embedded. Topologically, residues 161 to 176 (SVGTSEVQNMLNAIPE) are periplasmic. A membrane pass occupies residues 177–200 (VVTNGLNIAGGMIVVVGYAMVINM). The Cytoplasmic segment spans residues 201–207 (MRAGYLM). At 208–218 (PFFYLGFVTAA) the chain is embedded in the membrane. Residues 219 to 224 (FTNFNL) are Periplasmic-facing. A membrane pass occupies residues 225 to 242 (VALGVIGTVMAVLYIQLS). The Cytoplasmic segment spans residues 243–266 (PKYNRVAGAPAQAAGNNDLDNELD).

As to quaternary structure, homotrimer of protomers that are composed of two subunits, IIC and IID.

It localises to the cell inner membrane. Its function is as follows. The phosphoenolpyruvate-dependent sugar phosphotransferase system (sugar PTS), a major carbohydrate active transport system, catalyzes the phosphorylation of incoming sugar substrates concomitantly with their translocation across the cell membrane. The enzyme II ManXYZ PTS system is involved in mannose transport. The protein is PTS system mannose-specific EIIC component (manY) of Escherichia coli O157:H7.